We begin with the raw amino-acid sequence, 833 residues long: Leucine--tRNA ligase (833 aa).

Residues 41 to 52 carry the 'HIGH' region motif; sequence PYPSGAGLHVGH. The 'KMSKS' region motif lies at 610–614; that stretch reads KMSKS. Lys613 contributes to the ATP binding site.

Belongs to the class-I aminoacyl-tRNA synthetase family.

The protein resides in the cytoplasm. It catalyses the reaction tRNA(Leu) + L-leucine + ATP = L-leucyl-tRNA(Leu) + AMP + diphosphate. This chain is Leucine--tRNA ligase, found in Streptococcus pneumoniae (strain Taiwan19F-14).